Reading from the N-terminus, the 750-residue chain is Nibrin (750 aa).

The region spanning 24–83 (YIVGRKNCAILIENDQSISRNHAVLRVNFPVTSLSQTDEIPTLTIKDNSKYGTFINEEKM) is the FHA domain. BRCT domains follow at residues 105 to 181 (KFRV…SEFL) and 224 to 315 (GKTF…LAVI). Positions 111 to 328 (EPLVVCSSCL…TESYCNPQGQ (218 aa)) are mediates interaction with SP100. Positions 221 to 403 (IFKGKTFVFL…SRKLLQGTCN (183 aa)) are interaction with MTOR, MAPKAP1 and RICTOR. At Thr337 the chain carries Phosphothreonine. Phosphoserine; by ATM is present on Ser343. A phosphoserine mark is found at Ser347 and Ser433. 2 disordered regions span residues 429-479 (NYQL…SSCK) and 494-550 (QPAG…RKRK). Lys436 is covalently cross-linked (Glycyl lysine isopeptide (Lys-Gly) (interchain with G-Cter in ubiquitin)). The segment covering 446 to 457 (WSSQQQLNSIKN) has biased composition (polar residues). A Nuclear localization signal motif is present at residues 461–467 (PCSRKRE). Residues 502-514 (KSKDHESQSETLD) are compositionally biased toward basic and acidic residues. Phosphoserine occurs at positions 508 and 517. Lys528 is covalently cross-linked (Glycyl lysine isopeptide (Lys-Gly) (interchain with G-Cter in SUMO2)). Basic and acidic residues predominate over residues 540 to 550 (STEDLRARKRK). Glycyl lysine isopeptide (Lys-Gly) (interchain with G-Cter in SUMO2) cross-links involve residues Lys569 and Lys580. The segment covering 581–599 (QEADVSIRKKPRMDAERNQ) has biased composition (basic and acidic residues). Residues 581–622 (QEADVSIRKKPRMDAERNQHLNGGPVPESNSALQEDETGKKD) form a disordered region. Residues Lys683, Lys687, and Lys732 each participate in a glycyl lysine isopeptide (Lys-Gly) (interchain with G-Cter in ubiquitin) cross-link. Positions 737–746 (ADDLFRYNPN) match the FxF/Y motif motif.

It belongs to the Nibrin family. In terms of assembly, component of the MRN complex composed of two heterodimers RAD50 and MRE11 associated with a single NBN. The MRN complexes dimerize on DNA to form joined MRN-MRN oligomers required for DNA double-strand break repair. The MRN complexes dimerize on DNA to form joined MRN-MRN oligomers required for DNA double-strand break repair. As part of the MRN complex, interacts with MCM9; the interaction recruits the complex to DNA repair sites. Component of the BASC complex, at least composed of BRCA1, MSH2, MSH6, MLH1, ATM, BLM, RAD50, MRE11 and NBN. Interacts with histone H2AX; this requires phosphorylation of H2AX on 'Ser-139' and promotes NBN recruitment to DNA damage sites. Interacts with (phosphorylated) MDC1; promoting NBN recruitment to DNA damage sites. Interacts with (phosphorylated) RAD17; promoting NBN recruitment to DNA damage sites. Interacts (via FxF/Y motif) with ATM. Interacts with HJURP. Interacts with INTS3. Interacts with KPNA2. Interacts with TERF2; interaction is disrupted upon NBN phosphorylation by CDK2. Interacts with (phosphorylated) RBBP8/CtIP; the interaction links the role of the MRN complex in DNA double-strand break sensing to resection. Interacts with SP100; recruits NBN to PML bodies. Interacts with ATF2. Interacts with MTOR, MAPKAP1 isoform 2 and RICTOR; indicative for an association with the mTORC2 complex. Interacts with MRNIP. Interacts with UFL1; promoting UFL1 recruitment to double-strand breaks following DNA damage. Interacts with CYREN (via XLF motif). Post-translationally, phosphorylated by ATM in response of ionizing radiation, and such phosphorylation is responsible intra-S phase checkpoint control and telomere maintenance. Phosphorylated at Ser-433 by CDK2 in S/G2 phases abolishes interaction with TERF2, enabling DCLRE1B/Apollo recruitment to telomeres. Phosphorylation at Ser-433 in response to dysfunctional telomeres promotes non-homologous end joining repair at telomeres, while dephosphorylation by PPP1CA promotes microhomology-mediated end-joining (MMEJ) repair. In terms of processing, ubiquitinated at Lys-436 via 'Lys-6'-linked ubiquitin chains by RNF8, promoting NBN recruitment to DNA double-strand breaks (DSBs). Ubiquitinated at Lys-687 via 'Lys-63'-linked ubiquitin chains by PELI1: ubiquitination takes place following PELI1 phosphorylation and promotes ATM activation and DNA repair. Ubiquitinated at Lys-732 via 'Lys-63'-linked ubiquitin chains by the SCF(SKP2) complex: ubiquitination takes place following SKP2 phosphorylation and promotes ATM activation and DNA repair. In terms of tissue distribution, present at approximately equal levels in the heart at fetal day 17, at relatively constant levels at postnatal days 10, 17 and 21 and at slightly lower levels in the adult heart. Barely detectable in the brain. Not detected in kidney, very low levels in liver and skeletal muscle and moderate levels in heart, lung and brain (at protein level).

The protein localises to the nucleus. The protein resides in the chromosome. It localises to the PML body. Its subcellular location is the telomere. Functionally, component of the MRN complex, which plays a central role in double-strand break (DSB) repair, DNA recombination, maintenance of telomere integrity and meiosis. The MRN complex is involved in the repair of DNA double-strand breaks (DSBs) via homologous recombination (HR), an error-free mechanism which primarily occurs during S and G2 phases. The complex (1) mediates the end resection of damaged DNA, which generates proper single-stranded DNA, a key initial steps in HR, and is (2) required for the recruitment of other repair factors and efficient activation of ATM and ATR upon DNA damage. The MRN complex possesses single-strand endonuclease activity and double-strand-specific 3'-5' exonuclease activity, which are provided by MRE11, to initiate end resection, which is required for single-strand invasion and recombination. Within the MRN complex, NBN acts as a protein-protein adapter, which specifically recognizes and binds phosphorylated proteins, promoting their recruitment to DNA damage sites. Recruits MRE11 and RAD50 components of the MRN complex to DSBs in response to DNA damage. Promotes the recruitment of PI3/PI4-kinase family members ATM, ATR, and probably DNA-PKcs to the DNA damage sites, activating their functions. Mediates the recruitment of phosphorylated RBBP8/CtIP to DSBs, leading to cooperation between the MRN complex and RBBP8/CtIP to initiate end resection. RBBP8/CtIP specifically promotes the endonuclease activity of the MRN complex to clear DNA ends containing protein adducts. The MRN complex is also required for the processing of R-loops. NBN also functions in telomere length maintenance via its interaction with TERF2: interaction with TERF2 during G1 phase preventing recruitment of DCLRE1B/Apollo to telomeres. NBN also promotes DNA repair choice at dysfunctional telomeres: NBN phosphorylation by CK2 promotes non-homologous end joining repair at telomeres, while unphosphorylated NBN promotes microhomology-mediated end-joining (MMEJ) repair. Enhances AKT1 phosphorylation possibly by association with the mTORC2 complex. The polypeptide is Nibrin (Nbn) (Rattus norvegicus (Rat)).